The primary structure comprises 488 residues: BTB/POZ domain-containing protein 1 (488 aa).

Positions 1 to 19 (MASLGSAAAGEPATGAEAE) are enriched in low complexity. A disordered region spans residues 1-42 (MASLGSAAAGEPATGAEAEPGPPAPPPPPPPPPAPSPSALGP). Positions 20–36 (PGPPAPPPPPPPPPAPS) are enriched in pro residues. Positions 75–151 (SDVRFVLGKG…LYSDEVQIGP (77 aa)) constitute a BTB domain. Arg-85 carries the omega-N-methylarginine modification. The BACK domain maps to 190 to 290 (LTQARLFDEP…IRFPLMTIEE (101 aa)).

As to quaternary structure, interacts (via C-terminus) with TOP1. Interacts with TRIM5 isoform Delta. Interacts with CUL3. As to expression, strongly expressed in heart and skeletal muscle. Weakly expressed in myoblast C2C12 cells, but strongly up-regulated upon their differentiation into myotubes.

It localises to the cytoplasm. The protein operates within protein modification; protein ubiquitination. Probable substrate-specific adapter of an E3 ubiquitin-protein ligase complex which mediates the ubiquitination and subsequent proteasomal degradation of target proteins. Seems to regulate expression levels and/or subnuclear distribution of TOP1, via an unknown mechanism. May play a role in mesenchymal differentiation where it promotes myogenic differentiation and suppresses adipogenesis. The polypeptide is BTB/POZ domain-containing protein 1 (Btbd1) (Mus musculus (Mouse)).